A 632-amino-acid chain; its full sequence is tRNA uridine 5-carboxymethylaminomethyl modification enzyme MnmG (632 aa).

FAD is bound at residue 14–19 (GAGHAG). 273 to 287 (GPRYCPSFEDKIMRF) lines the NAD(+) pocket.

It belongs to the MnmG family. As to quaternary structure, homodimer. Heterotetramer of two MnmE and two MnmG subunits. It depends on FAD as a cofactor.

It localises to the cytoplasm. Its function is as follows. NAD-binding protein involved in the addition of a carboxymethylaminomethyl (cmnm) group at the wobble position (U34) of certain tRNAs, forming tRNA-cmnm(5)s(2)U34. The polypeptide is tRNA uridine 5-carboxymethylaminomethyl modification enzyme MnmG (Clostridium novyi (strain NT)).